The chain runs to 260 residues: Rhythmically expressed gene 2 protein (260 aa).

In Drosophila melanogaster (Fruit fly), this protein is Rhythmically expressed gene 2 protein (Reg-2).